Reading from the N-terminus, the 674-residue chain is Endopolyphosphatase (674 aa).

The Cytoplasmic segment spans residues 1–21 (MVVVGKSEVRNVSMSRPKKKS). 2 propeptides (removed in mature form) span residues 1-83 (MVVV…VIIK) and 385-674 (EQST…YKDD). Residue Lys-6 forms a Glycyl lysine isopeptide (Lys-Gly) (interchain with G-Cter in ubiquitin) linkage. A helical; Signal-anchor for type II membrane protein transmembrane segment spans residues 22 to 42 (LIAILSTCVLFFLVFIIGAKF). Topologically, residues 43-674 (QYVSVFSKFL…SFASSGYKDD (632 aa)) are vacuolar. An N-linked (GlcNAc...) asparagine glycan is attached at Asn-58. Positions 384-403 (MEQSTRVQQGEDSNEEDEET) are disordered. N-linked (GlcNAc...) asparagine glycans are attached at residues Asn-505 and Asn-511.

Belongs to the endopolyphosphatase PPN1 family. Homotetramer. Interacts with PPN2. Mn(2+) serves as cofactor. The cofactor is Mg(2+). Requires Co(2+) as cofactor. It depends on Zn(2+) as a cofactor. Processing by proteases in the vacuole is required for activation. Post-translationally, ubiquitinated. Ubiquitination mediates sorting into internal vesicles in late endosomes. TUL1 and RSP5 are required for ubiquitination. Other cytoplasmic Lys residues than Lys-6 may also be ubiquitinated. In terms of processing, N-glycosylated. N-glycosylation is essential for the protease-mediated maturation.

The protein localises to the vacuole membrane. The protein resides in the cytoplasm. The catalysed reaction is [phosphate](n+1) + n H2O = (n+1) phosphate + n H(+). It catalyses the reaction [phosphate](n) + H2O = [phosphate](n-1) + phosphate + H(+). The enzyme catalyses dATP + H2O = dADP + phosphate + H(+). Inhibited by heparin and EDTA. Catalyzes the hydrolysis of inorganic polyphosphate (polyP) chains of many hundreds of phosphate residues into shorter lengths. Has both exopolyphosphatase and endopolyphosphatase activities at different ratios depending on divalent cations by cleaving phosphate from the chain end and by fragmenting long-chain polymers into shorter ones, respectively. The limited digestion products are 1 and 3 P(i) residues. Also releases phosphate from dATP. dATP phosphohydrolase activity is about 7-fold lower than the exopolyphosphatase activity. This is Endopolyphosphatase from Saccharomyces cerevisiae (strain ATCC 204508 / S288c) (Baker's yeast).